The following is a 92-amino-acid chain: Putative pterin-4-alpha-carbinolamine dehydratase (92 aa).

This sequence belongs to the pterin-4-alpha-carbinolamine dehydratase family.

The catalysed reaction is (4aS,6R)-4a-hydroxy-L-erythro-5,6,7,8-tetrahydrobiopterin = (6R)-L-erythro-6,7-dihydrobiopterin + H2O. The chain is Putative pterin-4-alpha-carbinolamine dehydratase from Picosynechococcus sp. (strain ATCC 27264 / PCC 7002 / PR-6) (Agmenellum quadruplicatum).